We begin with the raw amino-acid sequence, 901 residues long: Translation initiation factor IF-2 (901 aa).

The segment at 48–313 (HLNREHGGSS…SSLQQGFTKP (266 aa)) is disordered. Residues 68-82 (STLSVPGTGGKSKSV) are compositionally biased toward polar residues. Residues 106 to 226 (ALAKREAEEQ…RMAEANEGKW (121 aa)) are compositionally biased toward basic and acidic residues. Positions 263-277 (ARGRGGKAAKQKKGS) are enriched in basic residues. The span at 278–291 (KLSESKADREEARA) shows a compositional bias: basic and acidic residues. The region spanning 400 to 569 (PRAPVVTIMG…LLQAEVLELK (170 aa)) is the tr-type G domain. Positions 409–416 (GHVDHGKT) are G1. 409–416 (GHVDHGKT) serves as a coordination point for GTP. Residues 434-438 (GITQH) are G2. Positions 455-458 (DTPG) are G3. GTP is bound by residues 455 to 459 (DTPGH) and 509 to 512 (NKID). Residues 509–512 (NKID) are G4. The G5 stretch occupies residues 545-547 (SAK).

It belongs to the TRAFAC class translation factor GTPase superfamily. Classic translation factor GTPase family. IF-2 subfamily.

The protein resides in the cytoplasm. One of the essential components for the initiation of protein synthesis. Protects formylmethionyl-tRNA from spontaneous hydrolysis and promotes its binding to the 30S ribosomal subunits. Also involved in the hydrolysis of GTP during the formation of the 70S ribosomal complex. In Edwardsiella ictaluri (strain 93-146), this protein is Translation initiation factor IF-2.